The sequence spans 682 residues: MSRKQLALFEPTLVLQALKEAVKKLNPQAQWRNPVMFIVWIGSLLTTCICIAMASGAMPGNALFSAAISGWLWVTVLFANFAEALAEGRSKAQANSLKGVKKTAFARKLREPKYGAAADKVPADQLRKGDIVLVEAGDIIPCDGEVIEGGASVDESAITGESAPVIRESGGDFASVTGGTRILSDWLVIECSVNPGETFLDRMIAMVEGAQRRKTPNEIALTILLIALTIVFLLATATLWPFSAWGGNAVSVTVLVALLVCLIPTTIGGLLSAIGVAGMSRMLGANVIATSGRAVEAAGDVDVLLLDKTGTITLGNRQASEFIPAQGVEEKTLANAAQLASLADETPEGRSIVILAKQRFNLRERDVQSLHATFVPFTAQSRMSGINIDNRMIRKGSVDAIRRHVEANGGHFPADVDQKVDQVARQGATPLVVVEGSRVLGVIALKDIVKGGIKERFAQLRKMGIKTVMITGDNRLTAAAIAAEAGVDDFLAEATPEAKLALIRQYQAEGRLVAMTGDGTNDAPALAQADVAVAMNSGTQAAKEAGNMVDLDSNPTKLIEVVHIGKQMLMTRGSLTTFSIANDVAKYFAIIPAAFAATYPQLNALNIMRLHSPDSAILSAVIFNALIIVFLIPLALKGVSYKPLTASAMLRRNLWIYGLGGLLVPFIGIKVIDLLLTVCGLV.

4 helical membrane-spanning segments follow: residues 34–54, 62–82, 219–239, and 254–274; these read PVMFIVWIGSLLTTCICIAMA, ALFSAAISGWLWVTVLFANFA, IALTILLIALTIVFLLATATL, and VLVALLVCLIPTTIGGLLSAI. Asp-307 (4-aspartylphosphate intermediate) is an active-site residue. Residues Asp-344, Glu-348, 377–384, and Lys-395 each bind ATP; that span reads FTAQSRMS. 2 residues coordinate Mg(2+): Asp-518 and Asp-522. The next 3 helical transmembrane spans lie at 588 to 608, 616 to 636, and 656 to 676; these read FAIIPAAFAATYPQLNALNIM, AILSAVIFNALIIVFLIPLAL, and IYGLGGLLVPFIGIKVIDLLL.

This sequence belongs to the cation transport ATPase (P-type) (TC 3.A.3) family. Type IA subfamily. As to quaternary structure, the system is composed of three essential subunits: KdpA, KdpB and KdpC.

Its subcellular location is the cell inner membrane. It catalyses the reaction K(+)(out) + ATP + H2O = K(+)(in) + ADP + phosphate + H(+). Part of the high-affinity ATP-driven potassium transport (or Kdp) system, which catalyzes the hydrolysis of ATP coupled with the electrogenic transport of potassium into the cytoplasm. This subunit is responsible for energy coupling to the transport system and for the release of the potassium ions to the cytoplasm. This is Potassium-transporting ATPase ATP-binding subunit from Escherichia coli O17:K52:H18 (strain UMN026 / ExPEC).